The primary structure comprises 325 residues: Phospho-N-acetylmuramoyl-pentapeptide-transferase (325 aa).

The next 9 helical transmembrane spans lie at 7–27 (LFVLILSFAAAVIMSPLFIPF), 57–77 (IVIVLSIFISALAIGIAITGF), 81–101 (LLLLMVVTLGYGIVGFVDDYL), 122–142 (VIAAIFYIGLLAIGFDTFIAI), 146–166 (TFGFDLGWLYLILIVLMLLGA), 186–206 (IAFGAFAILAWSGGFIDTALF), 227–247 (VFMGDTGSLALGGAIAAIAIL), 252–272 (LMLIIVGGVFVIETLSVIIQV), and 302–322 (VVVTFWLVGMIFAIMGVYIGV).

It belongs to the glycosyltransferase 4 family. MraY subfamily. The cofactor is Mg(2+).

It is found in the cell membrane. The catalysed reaction is UDP-N-acetyl-alpha-D-muramoyl-L-alanyl-gamma-D-glutamyl-meso-2,6-diaminopimeloyl-D-alanyl-D-alanine + di-trans,octa-cis-undecaprenyl phosphate = di-trans,octa-cis-undecaprenyl diphospho-N-acetyl-alpha-D-muramoyl-L-alanyl-D-glutamyl-meso-2,6-diaminopimeloyl-D-alanyl-D-alanine + UMP. It functions in the pathway cell wall biogenesis; peptidoglycan biosynthesis. Functionally, catalyzes the initial step of the lipid cycle reactions in the biosynthesis of the cell wall peptidoglycan: transfers peptidoglycan precursor phospho-MurNAc-pentapeptide from UDP-MurNAc-pentapeptide onto the lipid carrier undecaprenyl phosphate, yielding undecaprenyl-pyrophosphoryl-MurNAc-pentapeptide, known as lipid I. The sequence is that of Phospho-N-acetylmuramoyl-pentapeptide-transferase from Shouchella clausii (strain KSM-K16) (Alkalihalobacillus clausii).